Here is a 102-residue protein sequence, read N- to C-terminus: Small ribosomal subunit protein uS10 (102 aa).

It belongs to the universal ribosomal protein uS10 family. As to quaternary structure, part of the 30S ribosomal subunit.

Involved in the binding of tRNA to the ribosomes. The chain is Small ribosomal subunit protein uS10 from Lactobacillus delbrueckii subsp. bulgaricus (strain ATCC 11842 / DSM 20081 / BCRC 10696 / JCM 1002 / NBRC 13953 / NCIMB 11778 / NCTC 12712 / WDCM 00102 / Lb 14).